The following is a 191-amino-acid chain: Pentapeptide repeat protein MfpA (191 aa).

In terms of domain architecture, Pentapeptide repeat spans 115-154; it reads CRLREVSLVGADLRKAVLRRADLTGSRVQDARLEEADLRG.

The protein belongs to the pentapeptide repeat protein family. In terms of assembly, homodimer. Probably interacts with DNA gyrase.

Its function is as follows. When present on multicopy plasmids confers increased resistance to fluoroquinolone antibiotics such as ciprofloxacin and sparfloxacin but not the quinolone nalidixic acid. Forms a structure that exhibits size, shape and electrostatic similarity to B-form DNA; it may bind to DNA gyrase which is postulated to protect it from fluoroquinolones. This is Pentapeptide repeat protein MfpA from Mycolicibacterium smegmatis (strain ATCC 700084 / mc(2)155) (Mycobacterium smegmatis).